The primary structure comprises 91 residues: Large ribosomal subunit protein bL27 (91 aa).

This sequence belongs to the bacterial ribosomal protein bL27 family. In terms of assembly, part of the 50S ribosomal subunit. Contacts protein L18.

Binds the 5S and 23S rRNAs and also the tRNA in the P site. This is Large ribosomal subunit protein bL27 (rpmA) from Deinococcus radiodurans (strain ATCC 13939 / DSM 20539 / JCM 16871 / CCUG 27074 / LMG 4051 / NBRC 15346 / NCIMB 9279 / VKM B-1422 / R1).